Reading from the N-terminus, the 257-residue chain is AKLQTGTAYLPGKHAPLQWTQFDPLEFLEELKKINYQTDSWEELLNKAEVGQGYMNRPCLNPTDPECPVTAPNKNSTKPPDVALILSGGCYGLSKKYMRWQEELIVGGTVKNSNGTLLRAQALQTMFQLMTPKQMYEHFRGYEDVLHINWNEDKAAAILEAWQRMYVEVVHQSVPQNSTQKVLSFTTTTLDDILKSFSDISVIRVASGYLLMLAYACLTMLRWDCAKSQGAVGLAGVLLVALSVAAGLGLCSLIGIS.

Residues 1-199 are Extracellular-facing; that stretch reads AKLQTGTAYL…LDDILKSFSD (199 aa). N-linked (GlcNAc...) asparagine glycans are attached at residues Asn-75, Asn-114, and Asn-177. A helical membrane pass occupies residues 200–220; that stretch reads ISVIRVASGYLLMLAYACLTM. In terms of domain architecture, SSD spans 201-257; the sequence is SVIRVASGYLLMLAYACLTMLRWDCAKSQGAVGLAGVLLVALSVAAGLGLCSLIGIS. Over 221–235 the chain is Cytoplasmic; sequence LRWDCAKSQGAVGLA. Residues 236 to 256 traverse the membrane as a helical segment; sequence GVLLVALSVAAGLGLCSLIGI.

It belongs to the patched family. In terms of processing, glycosylation is necessary for SHH binding. In terms of tissue distribution, in the eye, detected in neural retina, iris, retinal pigment epithelium, but not in lens.

It localises to the membrane. Acts as a receptor for sonic hedgehog (SHH), indian hedgehog (IHH) and desert hedgehog (DHH). Associates with the smoothened protein (SMO) to transduce the hedgehog's proteins signal. The chain is Protein patched homolog 1 (PTC1) from Cynops pyrrhogaster (Japanese fire-bellied newt).